A 258-amino-acid chain; its full sequence is F-box/LRR-repeat protein 25 (258 aa).

The region spanning 27 to 76 (SDSISNLPDEILHHILSFIPETNLVIRTSVLSKRWRHVWSKTPHLSFEWL) is the F-box domain. 4 LRR repeats span residues 101-130 (CTSY…SLAF), 136-161 (CNKF…SLTP), 177-202 (RCNL…SLKF), and 224-249 (RRSC…RLRD).

The sequence is that of F-box/LRR-repeat protein 25 (FBL25) from Arabidopsis thaliana (Mouse-ear cress).